We begin with the raw amino-acid sequence, 381 residues long: MALDNEAPVNSLGFAKSPAETRVVVAMSGGVDSSVVAAYLADQGYDVVGVTLQLYDHGAALAKKGACCAGIDIHDARRVAEERGFPHYVLDYENIFKDAVIDEFADSYLAGATPVPCIRCNERVKFKDLLETAKDLEADCMATGHYIQRKMGEHGPELHSAEDANRDQSYFLFSTTPEQLDFLRFPLGHLPSKDATREMAAQYGLSVADKPDSQDICFVPNGDYASVIQKLRPGAAEPGQIVHADGRVLGEHNGVIHYTIGQRRGLGIGGLSEPLYVVKLDVDQKQVIVGPKEMLATRRVPVREINWLGDAPFTSRDEWHLSVKVRSTRPPRDAIIRPISETEAEVELFSAEEGISPGQACVFYDPNGSRIYGGGWIWKGQ.

ATP-binding positions include 26–33 and leucine 52; that span reads AMSGGVDS. The active-site Nucleophile is the cysteine 120. A disulfide bridge connects residues cysteine 120 and cysteine 217. Glycine 144 lines the ATP pocket. The tract at residues 166 to 168 is interaction with tRNA; that stretch reads RDQ. The active-site Cysteine persulfide intermediate is cysteine 217.

This sequence belongs to the MnmA/TRMU family.

The protein localises to the cytoplasm. The enzyme catalyses S-sulfanyl-L-cysteinyl-[protein] + uridine(34) in tRNA + AH2 + ATP = 2-thiouridine(34) in tRNA + L-cysteinyl-[protein] + A + AMP + diphosphate + H(+). Its function is as follows. Catalyzes the 2-thiolation of uridine at the wobble position (U34) of tRNA, leading to the formation of s(2)U34. In Ruegeria sp. (strain TM1040) (Silicibacter sp.), this protein is tRNA-specific 2-thiouridylase MnmA.